Reading from the N-terminus, the 205-residue chain is GTP cyclohydrolase-2 (205 aa).

49–53 (RLHSE) lines the GTP pocket. The Zn(2+) site is built by Cys-54, Cys-65, and Cys-67. GTP is bound by residues Gln-70, 92 to 94 (EGR), and Thr-114. The Proton acceptor role is filled by Asp-126. The active-site Nucleophile is the Arg-128. Thr-149 and Lys-154 together coordinate GTP.

This sequence belongs to the GTP cyclohydrolase II family. The cofactor is Zn(2+).

It carries out the reaction GTP + 4 H2O = 2,5-diamino-6-hydroxy-4-(5-phosphoribosylamino)-pyrimidine + formate + 2 phosphate + 3 H(+). It functions in the pathway cofactor biosynthesis; riboflavin biosynthesis; 5-amino-6-(D-ribitylamino)uracil from GTP: step 1/4. Catalyzes the conversion of GTP to 2,5-diamino-6-ribosylamino-4(3H)-pyrimidinone 5'-phosphate (DARP), formate and pyrophosphate. This is GTP cyclohydrolase-2 from Pseudomonas aeruginosa (strain LESB58).